Consider the following 171-residue polypeptide: Minor capsid protein 3 (171 aa).

Interacts with the major capsid protein.

It localises to the virion. Its function is as follows. One of the minor capsid proteins that constitute a network internal to the major capsid proteins and outside the lipid membrane. The minor capsid proteins glue and stabilize the capsomers. The chain is Minor capsid protein 3 from Chlorella (PBCV-1).